Consider the following 250-residue polypeptide: Carboxy-S-adenosyl-L-methionine synthase (250 aa).

Residues Y45, G70–S72, D95–N96, D123–I124, N138, and R205 each bind S-adenosyl-L-methionine.

The protein belongs to the class I-like SAM-binding methyltransferase superfamily. Cx-SAM synthase family. Homodimer.

It catalyses the reaction prephenate + S-adenosyl-L-methionine = carboxy-S-adenosyl-L-methionine + 3-phenylpyruvate + H2O. Catalyzes the conversion of S-adenosyl-L-methionine (SAM) to carboxy-S-adenosyl-L-methionine (Cx-SAM). This is Carboxy-S-adenosyl-L-methionine synthase from Marinobacter nauticus (strain ATCC 700491 / DSM 11845 / VT8) (Marinobacter aquaeolei).